Reading from the N-terminus, the 20-residue chain is Agglutinin beta-2 chain (20 aa).

Residues 1-20 (GRNGKSQSIIVGPWGDRVTN) form a disordered region.

Belongs to the jacalin lectin family. In terms of assembly, formed of four alpha chains and four beta chains.

Its function is as follows. D-galactose-specific lectin, binds the T-antigen structure Gal-beta1,3-GalNAc. The sequence is that of Agglutinin beta-2 chain from Maclura pomifera (Osage orange).